Consider the following 159-residue polypeptide: MELNFMRILATIINFIILILILKHFFWDKIKRAIDARQEAIDETILKADEDAEKARRLRLDNERILKSAKEDGRKLREEQKKEADRIYKEIVDDAHREAESIINRANIEIQREEEKVKYELKQQVVDISVMLSEKALGESIDESKHRELINDFIEKVGI.

The chain crosses the membrane as a helical span at residues 8-28 (ILATIINFIILILILKHFFWD).

It belongs to the ATPase B chain family. As to quaternary structure, F-type ATPases have 2 components, F(1) - the catalytic core - and F(0) - the membrane proton channel. F(1) has five subunits: alpha(3), beta(3), gamma(1), delta(1), epsilon(1). F(0) has three main subunits: a(1), b(2) and c(10-14). The alpha and beta chains form an alternating ring which encloses part of the gamma chain. F(1) is attached to F(0) by a central stalk formed by the gamma and epsilon chains, while a peripheral stalk is formed by the delta and b chains.

The protein localises to the cell membrane. Its function is as follows. F(1)F(0) ATP synthase produces ATP from ADP in the presence of a proton or sodium gradient. F-type ATPases consist of two structural domains, F(1) containing the extramembraneous catalytic core and F(0) containing the membrane proton channel, linked together by a central stalk and a peripheral stalk. During catalysis, ATP synthesis in the catalytic domain of F(1) is coupled via a rotary mechanism of the central stalk subunits to proton translocation. Component of the F(0) channel, it forms part of the peripheral stalk, linking F(1) to F(0). This chain is ATP synthase subunit b, found in Clostridium perfringens (strain SM101 / Type A).